The chain runs to 156 residues: Small ribosomal subunit protein uS7 (156 aa).

The protein belongs to the universal ribosomal protein uS7 family. In terms of assembly, part of the 30S ribosomal subunit. Contacts proteins S9 and S11.

Functionally, one of the primary rRNA binding proteins, it binds directly to 16S rRNA where it nucleates assembly of the head domain of the 30S subunit. Is located at the subunit interface close to the decoding center, probably blocks exit of the E-site tRNA. This chain is Small ribosomal subunit protein uS7, found in Aromatoleum aromaticum (strain DSM 19018 / LMG 30748 / EbN1) (Azoarcus sp. (strain EbN1)).